Reading from the N-terminus, the 145-residue chain is ATP synthase epsilon chain (145 aa).

Residues 93–104 (AEAEKARARAQE) show a composition bias toward basic and acidic residues. Residues 93 to 113 (AEAEKARARAQEALKNPDASK) are disordered.

It belongs to the ATPase epsilon chain family. F-type ATPases have 2 components, CF(1) - the catalytic core - and CF(0) - the membrane proton channel. CF(1) has five subunits: alpha(3), beta(3), gamma(1), delta(1), epsilon(1). CF(0) has three main subunits: a, b and c.

It is found in the cell inner membrane. Produces ATP from ADP in the presence of a proton gradient across the membrane. The protein is ATP synthase epsilon chain of Francisella philomiragia subsp. philomiragia (strain ATCC 25017 / CCUG 19701 / FSC 153 / O#319-036).